A 356-amino-acid chain; its full sequence is Ferredoxin--NADP reductase (356 aa).

Residues T25, E44, Q52, Y57, V97, F132, D298, and S339 each coordinate FAD.

It belongs to the ferredoxin--NADP reductase type 2 family. As to quaternary structure, homodimer. The cofactor is FAD.

It catalyses the reaction 2 reduced [2Fe-2S]-[ferredoxin] + NADP(+) + H(+) = 2 oxidized [2Fe-2S]-[ferredoxin] + NADPH. In Chlorobaculum parvum (strain DSM 263 / NCIMB 8327) (Chlorobium vibrioforme subsp. thiosulfatophilum), this protein is Ferredoxin--NADP reductase.